Here is a 635-residue protein sequence, read N- to C-terminus: Threonine--tRNA ligase (635 aa).

The 61-residue stretch at 1–61 folds into the TGS domain; it reads MIKITLKDGS…ENDCTLNLLT (61 aa). The tract at residues 242–532 is catalytic; sequence DHRKLGRELD…LTEHYAGAFP (291 aa). Positions 333, 384, and 509 each coordinate Zn(2+).

This sequence belongs to the class-II aminoacyl-tRNA synthetase family. In terms of assembly, homodimer. The cofactor is Zn(2+).

It is found in the cytoplasm. The catalysed reaction is tRNA(Thr) + L-threonine + ATP = L-threonyl-tRNA(Thr) + AMP + diphosphate + H(+). Functionally, catalyzes the attachment of threonine to tRNA(Thr) in a two-step reaction: L-threonine is first activated by ATP to form Thr-AMP and then transferred to the acceptor end of tRNA(Thr). Also edits incorrectly charged L-seryl-tRNA(Thr). The sequence is that of Threonine--tRNA ligase from Acetivibrio thermocellus (strain ATCC 27405 / DSM 1237 / JCM 9322 / NBRC 103400 / NCIMB 10682 / NRRL B-4536 / VPI 7372) (Clostridium thermocellum).